Here is a 345-residue protein sequence, read N- to C-terminus: Protein RecA (345 aa).

Residue G66–T73 coordinates ATP.

It belongs to the RecA family.

It localises to the cytoplasm. Its function is as follows. Can catalyze the hydrolysis of ATP in the presence of single-stranded DNA, the ATP-dependent uptake of single-stranded DNA by duplex DNA, and the ATP-dependent hybridization of homologous single-stranded DNAs. It interacts with LexA causing its activation and leading to its autocatalytic cleavage. In Frankia casuarinae (strain DSM 45818 / CECT 9043 / HFP020203 / CcI3), this protein is Protein RecA.